The sequence spans 318 residues: Methionyl-tRNA formyltransferase (318 aa).

112-115 (SILP) is a binding site for (6S)-5,6,7,8-tetrahydrofolate.

Belongs to the Fmt family.

The enzyme catalyses L-methionyl-tRNA(fMet) + (6R)-10-formyltetrahydrofolate = N-formyl-L-methionyl-tRNA(fMet) + (6S)-5,6,7,8-tetrahydrofolate + H(+). In terms of biological role, attaches a formyl group to the free amino group of methionyl-tRNA(fMet). The formyl group appears to play a dual role in the initiator identity of N-formylmethionyl-tRNA by promoting its recognition by IF2 and preventing the misappropriation of this tRNA by the elongation apparatus. In Shewanella sp. (strain ANA-3), this protein is Methionyl-tRNA formyltransferase.